The primary structure comprises 212 residues: Large ribosomal subunit protein uL3 (212 aa).

The residue at position 153 (glutamine 153) is an N5-methylglutamine.

This sequence belongs to the universal ribosomal protein uL3 family. As to quaternary structure, part of the 50S ribosomal subunit. Forms a cluster with proteins L14 and L19. Methylated by PrmB.

Functionally, one of the primary rRNA binding proteins, it binds directly near the 3'-end of the 23S rRNA, where it nucleates assembly of the 50S subunit. The chain is Large ribosomal subunit protein uL3 from Acinetobacter baylyi (strain ATCC 33305 / BD413 / ADP1).